Here is a 344-residue protein sequence, read N- to C-terminus: MPSAGVERHDGARVISIVGPTASGKTGLGIAIARRLADRGERAEIVNADAYQMYRGMDIGTAKASDEERAAVRHHLLDVIEPSETMSVARFQQMARETIADLKSRGIRPILVGGSGLYARAAIDDISFPGTDPQIREHLEERERTEGATALFRELAVKDPQAAEHMDPRNPRRIIRALEVIEVTGKPYSATLPRYRYVIPSVQLGLDLDRADLDKRIDVRTRQMFDGGFVDEVARLRSHLGPTAARALGYQQVIDHLDGLVDLDDTMADIAQKTKRLARKQMGWFGRDPRIHWLSALNPALVDNAMAVIDHADAGDYDAIDMHAQEYVQHHLGDIRRPSGAGPV.

19 to 26 contributes to the ATP binding site; sequence GPTASGKT. Substrate is bound at residue 21–26; sequence TASGKT.

It belongs to the IPP transferase family. As to quaternary structure, monomer. The cofactor is Mg(2+).

The catalysed reaction is adenosine(37) in tRNA + dimethylallyl diphosphate = N(6)-dimethylallyladenosine(37) in tRNA + diphosphate. Catalyzes the transfer of a dimethylallyl group onto the adenine at position 37 in tRNAs that read codons beginning with uridine, leading to the formation of N6-(dimethylallyl)adenosine (i(6)A). The polypeptide is tRNA dimethylallyltransferase (Bifidobacterium animalis subsp. lactis (strain AD011)).